Reading from the N-terminus, the 325-residue chain is Gibberellin 20-oxidase-like protein (325 aa).

The Fe2OG dioxygenase domain maps to 152-266 (CHGYFRINNY…RFSLAFFWCF (115 aa)). His186, Asp188, and His244 together coordinate Fe cation. Position 257 (Arg257) interacts with 2-oxoglutarate.

This sequence belongs to the iron/ascorbate-dependent oxidoreductase family. GA20OX subfamily. Requires Fe(2+) as cofactor. In terms of tissue distribution, highly expressed in elongation zone of lateral roots.

Negative regulator of root hair growth. The chain is Gibberellin 20-oxidase-like protein from Arabidopsis thaliana (Mouse-ear cress).